Consider the following 82-residue polypeptide: Small ribosomal subunit protein bS16 (82 aa).

This sequence belongs to the bacterial ribosomal protein bS16 family.

The polypeptide is Small ribosomal subunit protein bS16 (Glaesserella parasuis serovar 5 (strain SH0165) (Haemophilus parasuis)).